A 116-amino-acid chain; its full sequence is Large ribosomal subunit protein bL19 (116 aa).

This sequence belongs to the bacterial ribosomal protein bL19 family.

Its function is as follows. This protein is located at the 30S-50S ribosomal subunit interface and may play a role in the structure and function of the aminoacyl-tRNA binding site. The polypeptide is Large ribosomal subunit protein bL19 (Stutzerimonas stutzeri (strain A1501) (Pseudomonas stutzeri)).